The following is a 169-amino-acid chain: NADH-quinone oxidoreductase subunit B (169 aa).

C42, C43, C107, and C136 together coordinate [4Fe-4S] cluster.

This sequence belongs to the complex I 20 kDa subunit family. As to quaternary structure, NDH-1 is composed of 14 different subunits. Subunits NuoB, C, D, E, F, and G constitute the peripheral sector of the complex. The cofactor is [4Fe-4S] cluster.

The protein resides in the cell inner membrane. The enzyme catalyses a quinone + NADH + 5 H(+)(in) = a quinol + NAD(+) + 4 H(+)(out). Functionally, NDH-1 shuttles electrons from NADH, via FMN and iron-sulfur (Fe-S) centers, to quinones in the respiratory chain. Couples the redox reaction to proton translocation (for every two electrons transferred, four hydrogen ions are translocated across the cytoplasmic membrane), and thus conserves the redox energy in a proton gradient. The polypeptide is NADH-quinone oxidoreductase subunit B (Campylobacter hominis (strain ATCC BAA-381 / DSM 21671 / CCUG 45161 / LMG 19568 / NCTC 13146 / CH001A)).